An 847-amino-acid chain; its full sequence is Bifunctional lysine-specific demethylase and histidyl-hydroxylase NO66 (847 aa).

The segment covering 1 to 24 (MEKVTNSAAAKPQGNNKKQESAYN) has biased composition (polar residues). Disordered regions lie at residues 1-45 (MEKV…SDLL), 203-223 (AEAD…KESV), and 254-320 (AEKE…ERKQ). The span at 203–214 (AEADAKNNDTKK) shows a compositional bias: basic and acidic residues. The segment covering 268-278 (STSSKEAAAAK) has biased composition (low complexity). Residues 279–288 (TADHERRLLA) show a composition bias toward basic and acidic residues. Residues 304–314 (AMESVATQGAS) show a composition bias toward polar residues. Phosphoserine is present on serine 323. Threonine 329 is subject to Phosphothreonine. Residue serine 330 is modified to Phosphoserine. The interval 377–401 (KAPEEGNNNNDEKEMSTETSETHKT) is disordered. The segment covering 386–401 (NDEKEMSTETSETHKT) has biased composition (basic and acidic residues). Residues 499-644 (CSIRLLNPSA…NLLETLMPMV (146 aa)) form the JmjC domain. Residues histidine 545, aspartate 547, and histidine 610 each coordinate Fe cation.

This sequence belongs to the ROX family. NO66 subfamily. Fe(2+) is required as a cofactor.

Its subcellular location is the nucleus. It catalyses the reaction N(6),N(6)-dimethyl-L-lysyl(36)-[histone H3] + 2 2-oxoglutarate + 2 O2 = L-lysyl(36)-[histone H3] + 2 formaldehyde + 2 succinate + 2 CO2. In terms of biological role, oxygenase that can act as both a histone lysine demethylase and a ribosomal histidine hydroxylase. Specifically demethylates 'Lys-4' (H3K4me) and 'Lys-36' (H3K36me) of histone H3, thereby playing a central role in histone code. The polypeptide is Bifunctional lysine-specific demethylase and histidyl-hydroxylase NO66 (Drosophila simulans (Fruit fly)).